The sequence spans 187 residues: uncharacterized protein (187 aa).

Residues 1 to 28 form the signal peptide; the sequence is MRLHRTNNSRRCTILLILALKIFDFVDT. N-linked (GlcNAc...) asparagine glycosylation is found at Asn58, Asn70, Asn156, and Asn168.

It is found in the secreted. This is an uncharacterized protein from Caenorhabditis elegans.